A 342-amino-acid chain; its full sequence is Cytosolic Fe-S cluster assembly factor NBP35 (342 aa).

A disordered region spans residues 16–42; the sequence is SKAAPKLVAPEPEHCPGPESEQAGKGD. Cys-30, Cys-44, Cys-47, and Cys-53 together coordinate [4Fe-4S] cluster. Position 83–90 (83–90) interacts with ATP; that stretch reads GKGGVGKS. Positions 256 and 259 each coordinate [4Fe-4S] cluster.

This sequence belongs to the Mrp/NBP35 ATP-binding proteins family. NUBP1/NBP35 subfamily. In terms of assembly, heterotetramer of 2 NBP35 and 2 CFD1 chains. Requires [4Fe-4S] cluster as cofactor.

It localises to the cytoplasm. In terms of biological role, component of the cytosolic iron-sulfur (Fe/S) protein assembly (CIA) machinery. Required for maturation of extramitochondrial Fe-S proteins. The NBP35-CFD1 heterotetramer forms a Fe-S scaffold complex, mediating the de novo assembly of an Fe-S cluster and its transfer to target apoproteins. The chain is Cytosolic Fe-S cluster assembly factor NBP35 from Coccidioides immitis (strain RS) (Valley fever fungus).